The primary structure comprises 185 residues: dTTP/UTP pyrophosphatase (185 aa).

The Proton acceptor role is filled by Asp67.

Belongs to the Maf family. YhdE subfamily. A divalent metal cation is required as a cofactor.

Its subcellular location is the cytoplasm. It carries out the reaction dTTP + H2O = dTMP + diphosphate + H(+). It catalyses the reaction UTP + H2O = UMP + diphosphate + H(+). Its function is as follows. Nucleoside triphosphate pyrophosphatase that hydrolyzes dTTP and UTP. May have a dual role in cell division arrest and in preventing the incorporation of modified nucleotides into cellular nucleic acids. In Lacticaseibacillus casei (strain BL23) (Lactobacillus casei), this protein is dTTP/UTP pyrophosphatase.